We begin with the raw amino-acid sequence, 379 residues long: Queuine tRNA-ribosyltransferase (379 aa).

The active-site Proton acceptor is aspartate 94. Substrate-binding positions include 94–98 (DSGGF), aspartate 148, glutamine 191, and glycine 218. The RNA binding stretch occupies residues 249-255 (GVGSPDA). Aspartate 268 (nucleophile) is an active-site residue. Positions 273 to 277 (TRIAR) are RNA binding; important for wobble base 34 recognition. Residues cysteine 306, cysteine 308, cysteine 311, and histidine 337 each coordinate Zn(2+).

This sequence belongs to the queuine tRNA-ribosyltransferase family. As to quaternary structure, homodimer. Within each dimer, one monomer is responsible for RNA recognition and catalysis, while the other monomer binds to the replacement base PreQ1. Zn(2+) serves as cofactor.

The enzyme catalyses 7-aminomethyl-7-carbaguanine + guanosine(34) in tRNA = 7-aminomethyl-7-carbaguanosine(34) in tRNA + guanine. Its pathway is tRNA modification; tRNA-queuosine biosynthesis. Functionally, catalyzes the base-exchange of a guanine (G) residue with the queuine precursor 7-aminomethyl-7-deazaguanine (PreQ1) at position 34 (anticodon wobble position) in tRNAs with GU(N) anticodons (tRNA-Asp, -Asn, -His and -Tyr). Catalysis occurs through a double-displacement mechanism. The nucleophile active site attacks the C1' of nucleotide 34 to detach the guanine base from the RNA, forming a covalent enzyme-RNA intermediate. The proton acceptor active site deprotonates the incoming PreQ1, allowing a nucleophilic attack on the C1' of the ribose to form the product. After dissociation, two additional enzymatic reactions on the tRNA convert PreQ1 to queuine (Q), resulting in the hypermodified nucleoside queuosine (7-(((4,5-cis-dihydroxy-2-cyclopenten-1-yl)amino)methyl)-7-deazaguanosine). The chain is Queuine tRNA-ribosyltransferase from Staphylococcus aureus (strain Mu3 / ATCC 700698).